We begin with the raw amino-acid sequence, 395 residues long: Putative gustatory receptor 58a (395 aa).

At 1–32 (MLLKFMYIYGIGCGLMPAPLKKGQFLLGYKQR) the chain is on the cytoplasmic side. A helical membrane pass occupies residues 33–53 (WYLIYTACLHGGLLTVLPFTF). Residues 54 to 72 (PHYMYDDSYMSSNPVLKWT) lie on the Extracellular side of the membrane. A helical membrane pass occupies residues 73–93 (FNLTNITRIMAMFSGVLLMWF). Residues 94 to 131 (RRKRILNLGENLILHCLKCKTLDNRSKKYSKLRKRVRN) lie on the Cytoplasmic side of the membrane. Residues 132–152 (VLFQMLLVANLSILLGALILF) form a helical membrane-spanning segment. Residues 153 to 169 (RIHSVQRISKTAMIVAH) are Extracellular-facing. Residues 170–190 (ITQFIYVVFMMTGICVILLVL) form a helical membrane-spanning segment. The Cytoplasmic segment spans residues 191–250 (HWQSERLQIALKDLCSFLNHEERNSLTLSENKANRSLGKLAKLFKLFAENQRLVREVFRT). Residues 251 to 271 (FDLPIALLLLKMFVTNVNLVY) traverse the membrane as a helical segment. Residues 272–288 (HGVQFGNDTIETSSYTR) are Extracellular-facing. Residue asparagine 278 is glycosylated (N-linked (GlcNAc...) asparagine). The helical transmembrane segment at 289-309 (IVGQWVVISHYWSAVLLMNVV) threads the bilayer. Residues 310-366 (DDVTRRSDLKMGDLLREFSHLELVKRDFHLQLELFSDHLRCHPSTYKVCGLFIFNKQ) are Cytoplasmic-facing. Residues 367–387 (TSLAYFFYVLVQVLVLVQFDL) form a helical membrane-spanning segment. Residues 388–395 (KNKVEKRN) lie on the Extracellular side of the membrane.

This sequence belongs to the insect chemoreceptor superfamily. Gustatory receptor (GR) family. Gr22e subfamily. Expressed in the adult labellar chemosensory neurons.

Its subcellular location is the cell membrane. Probable gustatory receptor which mediates acceptance or avoidance behavior, depending on its substrates. The chain is Putative gustatory receptor 58a (Gr58a) from Drosophila melanogaster (Fruit fly).